A 420-amino-acid chain; its full sequence is Cytochrome c biogenesis protein Ccs1 (420 aa).

Helical transmembrane passes span 12 to 32, 71 to 91, and 157 to 177; these read LRFS…GTVI, TWWF…CTFL, and IAPI…IVGS.

This sequence belongs to the Ccs1/CcsB family. May interact with CcsA.

Its subcellular location is the plastid. It is found in the chloroplast thylakoid membrane. Required during biogenesis of c-type cytochromes (cytochrome c6 and cytochrome f) at the step of heme attachment. This chain is Cytochrome c biogenesis protein Ccs1, found in Phaeodactylum tricornutum (strain CCAP 1055/1).